The primary structure comprises 156 residues: Small ribosomal subunit protein uS7 (156 aa).

The protein belongs to the universal ribosomal protein uS7 family. In terms of assembly, part of the 30S ribosomal subunit. Contacts proteins S9 and S11.

Its function is as follows. One of the primary rRNA binding proteins, it binds directly to 16S rRNA where it nucleates assembly of the head domain of the 30S subunit. Is located at the subunit interface close to the decoding center, probably blocks exit of the E-site tRNA. The protein is Small ribosomal subunit protein uS7 of Actinobacillus succinogenes (strain ATCC 55618 / DSM 22257 / CCUG 43843 / 130Z).